Here is a 254-residue protein sequence, read N- to C-terminus: Glutathione S-transferase U12 (254 aa).

Residues 19–23 (KKRKK) carry the Nuclear localization signal motif. One can recognise a GST N-terminal domain in the interval 33-114 (TTVKLIGTWA…YVDESWPSDL (82 aa)). Glutathione-binding positions include 43 to 44 (SP), 71 to 72 (GK), 85 to 86 (KV), and 98 to 99 (ES). A GST C-terminal domain is found at 120-252 (LPSERAFARF…EFIEFAKKKF (133 aa)).

Belongs to the GST superfamily. Tau family.

It is found in the nucleus. It carries out the reaction RX + glutathione = an S-substituted glutathione + a halide anion + H(+). Functionally, may be involved in the conjugation of reduced glutathione to a wide number of exogenous and endogenous hydrophobic electrophiles and have a detoxification role against certain herbicides. The protein is Glutathione S-transferase U12 (GSTU12) of Arabidopsis thaliana (Mouse-ear cress).